The following is a 256-amino-acid chain: Tryptophan synthase alpha chain (256 aa).

Residues Glu-44 and Asp-55 each act as proton acceptor in the active site.

It belongs to the TrpA family. As to quaternary structure, tetramer of two alpha and two beta chains.

It catalyses the reaction (1S,2R)-1-C-(indol-3-yl)glycerol 3-phosphate + L-serine = D-glyceraldehyde 3-phosphate + L-tryptophan + H2O. Its pathway is amino-acid biosynthesis; L-tryptophan biosynthesis; L-tryptophan from chorismate: step 5/5. Functionally, the alpha subunit is responsible for the aldol cleavage of indoleglycerol phosphate to indole and glyceraldehyde 3-phosphate. In Coxiella burnetii (strain CbuK_Q154) (Coxiella burnetii (strain Q154)), this protein is Tryptophan synthase alpha chain.